A 280-amino-acid polypeptide reads, in one-letter code: Feruloyl esterase 1 (280 aa).

The signal sequence occupies residues 1–20 (MKAFATRALAFSVAAGQALA). Intrachain disulfides connect Cys49–Cys278, Cys111–Cys114, and Cys247–Cys254. Asn99 carries an N-linked (GlcNAc...) asparagine glycan. The active-site Nucleophile is Ser153. The Charge relay system role is filled by Asp214. The active-site Charge relay system is the His267.

The protein belongs to the AB hydrolase superfamily. FaeA family. In terms of processing, glycosylated.

The protein localises to the secreted. It carries out the reaction feruloyl-polysaccharide + H2O = ferulate + polysaccharide.. With respect to regulation, metal or basic ions Mn(2+), Ni(+), Mg(2+), and NH(4)(+) decrease the activity by 4.4% to 14.1%. The enzymatic activity is inhibited by Zn(2+) at a low concentration (1 mM) but not a high concentration (5 mM). Loses about a quarter of activity by the addition of 1 mM of Cu(2+) or Fe(3+) and activity is completely suppressed when the concentration was up to 5 mM. Low concentrations (0.25 and 0.5 M) of NaCl improve the activity by 5.6 % or 8.3%, respectively. Functionally, involved in degradation of plant cell walls. Hydrolyzes the feruloyl-arabinose ester bond in arabinoxylans, and the feruloyl-galactose ester bond in pectin. The polypeptide is Feruloyl esterase 1 (Penicillium parvum (Eupenicillium parvum)).